A 443-amino-acid polypeptide reads, in one-letter code: Signal recognition particle 54 kDa protein (443 aa).

Residues 107–114 (GIQGSGKT), 189–193 (DTAGR), and 247–250 (TKLD) contribute to the GTP site.

It belongs to the GTP-binding SRP family. SRP54 subfamily. Part of the signal recognition particle protein translocation system, which is composed of SRP and FtsY. Archaeal SRP consists of a 7S RNA molecule of 300 nucleotides and two protein subunits: SRP54 and SRP19.

It is found in the cytoplasm. It catalyses the reaction GTP + H2O = GDP + phosphate + H(+). Functionally, involved in targeting and insertion of nascent membrane proteins into the cytoplasmic membrane. Binds to the hydrophobic signal sequence of the ribosome-nascent chain (RNC) as it emerges from the ribosomes. The SRP-RNC complex is then targeted to the cytoplasmic membrane where it interacts with the SRP receptor FtsY. This chain is Signal recognition particle 54 kDa protein, found in Pyrococcus furiosus (strain ATCC 43587 / DSM 3638 / JCM 8422 / Vc1).